Here is a 241-residue protein sequence, read N- to C-terminus: Anthocyanidin 3-O-glucosyltransferase 4 (241 aa).

Residues Gln104, His119, Trp122, Asn123, Ser124, and Glu127 each contribute to the UDP-alpha-D-glucose site. Position 142 (Ala142) interacts with an anthocyanidin. UDP-alpha-D-glucose is bound by residues Glu143 and Gln144.

This sequence belongs to the UDP-glycosyltransferase family. In terms of tissue distribution, faintly expressed in cotyledons, roots and leaves.

The catalysed reaction is an anthocyanidin + UDP-alpha-D-glucose + H(+) = an anthocyanidin 3-O-beta-D-glucoside + UDP. It participates in pigment biosynthesis; anthocyanin biosynthesis. In the presence of other necessary color factors, this glycosylation reaction allows the accumulation of anthocyanin pigments. The polypeptide is Anthocyanidin 3-O-glucosyltransferase 4 (GT4) (Manihot esculenta (Cassava)).